We begin with the raw amino-acid sequence, 262 residues long: Protein N-terminal and lysine N-methyltransferase EFM7 (262 aa).

S-adenosyl-L-methionine is bound by residues Trp-59, 86–88 (GAA), Asp-108, Trp-143, and Ser-171.

The protein belongs to the class I-like SAM-binding methyltransferase superfamily. EFM7 family.

It localises to the cytoplasm. In terms of biological role, S-adenosyl-L-methionine-dependent protein methyltransferase that trimethylates the N-terminal glycine 'Gly-2' of elongation factor 1-alpha, before also catalyzing the mono- and dimethylation of 'Lys-3'. The sequence is that of Protein N-terminal and lysine N-methyltransferase EFM7 from Candida albicans (strain SC5314 / ATCC MYA-2876) (Yeast).